The following is a 424-amino-acid chain: Histidine--tRNA ligase (424 aa).

Belongs to the class-II aminoacyl-tRNA synthetase family. In terms of assembly, homodimer.

The protein resides in the cytoplasm. It carries out the reaction tRNA(His) + L-histidine + ATP = L-histidyl-tRNA(His) + AMP + diphosphate + H(+). The sequence is that of Histidine--tRNA ligase from Escherichia coli O127:H6 (strain E2348/69 / EPEC).